Here is a 1097-residue protein sequence, read N- to C-terminus: Translation initiation factor IF-2 (1097 aa).

The segment at leucine 79–alanine 458 is disordered. The span at alanine 97–leucine 112 shows a compositional bias: basic and acidic residues. Residues alanine 157–glutamate 173 show a composition bias toward low complexity. Composition is skewed to basic and acidic residues over residues glutamate 174–serine 190 and valine 202–glutamate 221. Residues threonine 224 to alanine 236 are compositionally biased toward low complexity. A compositionally biased stretch (polar residues) spans arginine 258–serine 267. The span at glutamate 268–methionine 286 shows a compositional bias: basic and acidic residues. Residues serine 340–asparagine 363 show a composition bias toward polar residues. Over residues histidine 376–asparagine 385 the composition is skewed to basic residues. Residues proline 402–leucine 443 show a composition bias toward basic and acidic residues. Residues threonine 591–lysine 761 enclose the tr-type G domain. Residues glycine 600–threonine 607 form a G1 region. Residue glycine 600–threonine 607 participates in GTP binding. The G2 stretch occupies residues glycine 625–histidine 629. Positions aspartate 647–glycine 650 are G3. Residues aspartate 647 to histidine 651 and asparagine 701 to aspartate 704 contribute to the GTP site. Positions asparagine 701–aspartate 704 are G4. Residues serine 737–lysine 739 form a G5 region.

It belongs to the TRAFAC class translation factor GTPase superfamily. Classic translation factor GTPase family. IF-2 subfamily.

The protein resides in the cytoplasm. Its function is as follows. One of the essential components for the initiation of protein synthesis. Protects formylmethionyl-tRNA from spontaneous hydrolysis and promotes its binding to the 30S ribosomal subunits. Also involved in the hydrolysis of GTP during the formation of the 70S ribosomal complex. In Chloroherpeton thalassium (strain ATCC 35110 / GB-78), this protein is Translation initiation factor IF-2.